A 273-amino-acid polypeptide reads, in one-letter code: Large ribosomal subunit protein uL2 (273 aa).

The disordered stretch occupies residues 196–273 (GNSDHGLESS…SSKYIIERRK (78 aa)). Basic residues-rich tracts occupy residues 209-220 (GRTRWMGRRPRN) and 255-264 (LKTRAPKKQS).

The protein belongs to the universal ribosomal protein uL2 family. Part of the 50S ribosomal subunit. Forms a bridge to the 30S subunit in the 70S ribosome.

Functionally, one of the primary rRNA binding proteins. Required for association of the 30S and 50S subunits to form the 70S ribosome, for tRNA binding and peptide bond formation. It has been suggested to have peptidyltransferase activity; this is somewhat controversial. Makes several contacts with the 16S rRNA in the 70S ribosome. The protein is Large ribosomal subunit protein uL2 of Phocaeicola vulgatus (strain ATCC 8482 / DSM 1447 / JCM 5826 / CCUG 4940 / NBRC 14291 / NCTC 11154) (Bacteroides vulgatus).